We begin with the raw amino-acid sequence, 340 residues long: ATP-dependent 6-phosphofructokinase (340 aa).

Residue Gly-11 coordinates ATP. ADP is bound at residue 21–25 (RAVVR). Residues 72–73 (RY) and 102–105 (GDGS) contribute to the ATP site. Asp-103 provides a ligand contact to Mg(2+). 125 to 127 (TID) provides a ligand contact to substrate. Residue Asp-127 is the Proton acceptor of the active site. Arg-154 contributes to the ADP binding site. Residues Arg-162 and 169 to 171 (MGR) each bind substrate. Residues 185-187 (GAD), Lys-211, and 213-215 (KNH) each bind ADP. Substrate is bound by residues Glu-222, Arg-244, and 250–253 (HIQR).

Belongs to the phosphofructokinase type A (PFKA) family. ATP-dependent PFK group I subfamily. Prokaryotic clade 'B1' sub-subfamily. As to quaternary structure, homotetramer. Mg(2+) serves as cofactor.

The protein resides in the cytoplasm. It carries out the reaction beta-D-fructose 6-phosphate + ATP = beta-D-fructose 1,6-bisphosphate + ADP + H(+). The protein operates within carbohydrate degradation; glycolysis; D-glyceraldehyde 3-phosphate and glycerone phosphate from D-glucose: step 3/4. With respect to regulation, allosterically activated by ADP and other diphosphonucleosides, and allosterically inhibited by phosphoenolpyruvate. Catalyzes the phosphorylation of D-fructose 6-phosphate to fructose 1,6-bisphosphate by ATP, the first committing step of glycolysis. This chain is ATP-dependent 6-phosphofructokinase, found in Lactococcus lactis subsp. lactis (Streptococcus lactis).